The primary structure comprises 265 residues: Synaptoporin (265 aa).

Residues 1-4 (MCMV) lie on the Cytoplasmic side of the membrane. The MARVEL domain maps to 1–202 (MCMVIFAPLF…NIWFVFKETG (202 aa)). A helical transmembrane segment spans residues 5–25 (IFAPLFAIFAFATCGGYSGGL). Over 26–81 (RLSVDCVNKTESNLSIDIAFAYPFRLHQVTFEVPTCEGKERQKLALVGDSSSSAEF) the chain is Vesicular. N-linked (GlcNAc...) asparagine glycans are attached at residues Asn-33 and Asn-38. The helical transmembrane segment at 82 to 102 (FVTVAVFAFLYSLAATVVYIF) threads the bilayer. At 103-114 (FQNKYRENNRGP) the chain is on the cytoplasmic side. Residues 115-135 (LIDFIVTVVFSFLWLVGSSAW) traverse the membrane as a helical segment. Residues 136 to 177 (AKGLSDVKVATDPKEVLLLMSACKQPSNKCMAVHSPVMSSLN) lie on the Vesicular side of the membrane. The N-linked (GlcNAc...) asparagine glycan is linked to Asn-177. The helical transmembrane segment at 178–198 (TSVVFGFLNFILWAGNIWFVF) threads the bilayer. Residues 199 to 265 (KETGWHSSGQ…SGPTSFNNQI (67 aa)) lie on the Cytoplasmic side of the membrane. Repeat 1 spans residues 210–214 (YLSDP). The tract at residues 210 to 242 (YLSDPMEKHSSSYNQGGYNQDSYGSSGGYSQQA) is 5 X approximate repeats. Phosphoserine occurs at positions 212 and 220. Residues 221-265 (SYNQGGYNQDSYGSSGGYSQQASLGPTSDEFGQQPSGPTSFNNQI) form a disordered region. 4 repeat units span residues 222–226 (YNQGG), 227–231 (YNQDS), 232–236 (YGSSG), and 238–242 (YSQQA). Over residues 224–243 (QGGYNQDSYGSSGGYSQQAS) the composition is skewed to low complexity. Positions 244–265 (LGPTSDEFGQQPSGPTSFNNQI) are enriched in polar residues.

This sequence belongs to the synaptophysin/synaptobrevin family. As to expression, central nervous system.

It is found in the cytoplasmic vesicle. It localises to the secretory vesicle. Its subcellular location is the synaptic vesicle membrane. The protein resides in the synapse. The protein localises to the synaptosome. Intrinsic membrane protein of small synaptic vesicles. Probable vesicular channel protein. The chain is Synaptoporin (Synpr) from Rattus norvegicus (Rat).